The chain runs to 325 residues: Olfactory receptor 1S2 (325 aa).

Residues 1–38 (MKTLCSFLQISRNMHQENQTTITEFILLGLSNQAEHQN) lie on the Extracellular side of the membrane. N18 carries an N-linked (GlcNAc...) asparagine glycan. The chain crosses the membrane as a helical span at residues 39 to 62 (LLFVLFLSMYVVTVVGNGLIIVAI). The Cytoplasmic portion of the chain corresponds to 63–70 (SLDIYLHT). Residues 71 to 92 (PMYLFLAYLSFADISSISNSVP) form a helical membrane-spanning segment. Topologically, residues 93 to 113 (KMLVNIQTNSQSISYESCITQ) are extracellular. An intrachain disulfide couples C110 to C202. The chain crosses the membrane as a helical span at residues 114–133 (MYFSIVFVVTDNLLLGTMAF). Over 134-152 (DHFVAICHPLNYTTFMRAR) the chain is Cytoplasmic. The chain crosses the membrane as a helical span at residues 153–171 (FGTLLTVISWFLSNIIALT). Over 172–208 (HTLLLIQLLFCDHNTLPHFFCDLAPLLKLSCSDTMIN) the chain is Extracellular. A helical membrane pass occupies residues 209–232 (ELVLFIVGLSVIIFPFVLIFFSYV). The Cytoplasmic portion of the chain corresponds to 233–249 (CIIRAVLGVSSTQGKWK). Residues 250–272 (AFSTCGSHLTIALLFYGTTVGVY) traverse the membrane as a helical segment. Residues 273–285 (FFPSSTHPEDTDK) lie on the Extracellular side of the membrane. A helical membrane pass occupies residues 286 to 305 (IGAVLFTVVTPMMNPFIYSL). Residues 306 to 325 (RNKDMKGALRKLINRKISSL) lie on the Cytoplasmic side of the membrane.

The protein belongs to the G-protein coupled receptor 1 family.

It is found in the cell membrane. Odorant receptor. In Homo sapiens (Human), this protein is Olfactory receptor 1S2 (OR1S2).